A 130-amino-acid polypeptide reads, in one-letter code: Small ribosomal subunit protein uS9 (130 aa).

The protein belongs to the universal ribosomal protein uS9 family.

This Bacillus cytotoxicus (strain DSM 22905 / CIP 110041 / 391-98 / NVH 391-98) protein is Small ribosomal subunit protein uS9.